The following is a 192-amino-acid chain: I-Kappa-B like protein H1 (192 aa).

ANK repeat units follow at residues 94–126 (KGAQ…DING), 131–161 (AGLT…DVKV), and 165–192 (GKET…SKKM).

Belongs to the polydnaviridae I-Kappa-B-like protein family.

In terms of biological role, suppresses the host immune response through NF-kappa-B inactivation. Possesses ankyrin repeat domains required for NF-kappa-B binding but lacks the regulatory regions required for dissociation from NF-kappa-B and degradation. Therefore, prevents host NF-kappa-B release and subsequent activation. The sequence is that of I-Kappa-B like protein H1 (H4) from Microplitis demolitor bracovirus (isolate Webb) (MdBV).